A 621-amino-acid polypeptide reads, in one-letter code: Kelch-like protein 6 (621 aa).

In terms of domain architecture, BTB spans 72-139; sequence TDVILCVDIQ…TYTSKALITK (68 aa). The region spanning 174-276 is the BACK domain; the sequence is CVGILRLADT…DPWYFVETVE (103 aa). Kelch repeat units lie at residues 320–367, 378–421, 422–468, 470–516, 517–558, and 560–606; these read VFMI…NKKW, EVYI…VLGG, KVYV…SHKK, LYVI…SFRD, RIYV…PCNN, and LYIT…TIRK.

In terms of tissue distribution, found in germinal center B-cells.

Involved in B-lymphocyte antigen receptor signaling and germinal center formation. This chain is Kelch-like protein 6 (KLHL6), found in Homo sapiens (Human).